Reading from the N-terminus, the 120-residue chain is Large ribosomal subunit protein uL18 (120 aa).

Belongs to the universal ribosomal protein uL18 family. Part of the 50S ribosomal subunit; part of the 5S rRNA/L5/L18/L25 subcomplex. Contacts the 5S and 23S rRNAs.

In terms of biological role, this is one of the proteins that bind and probably mediate the attachment of the 5S RNA into the large ribosomal subunit, where it forms part of the central protuberance. The polypeptide is Large ribosomal subunit protein uL18 (Herminiimonas arsenicoxydans).